We begin with the raw amino-acid sequence, 371 residues long: Hsc70-interacting protein (371 aa).

The interval 38 to 80 is disordered; it reads MGGKVPPATHKAKSEENTKEEKRDKTTEENIKTEELSSEESDL. Positions 49-72 are enriched in basic and acidic residues; it reads AKSEENTKEEKRDKTTEENIKTEE. TPR repeat units follow at residues 113–146, 147–180, and 181–214; these read ANEKKGAAIEALNDGELQKAIDLFTDAIKLNPRL, AILYAKRASVFVKLQKPNAAIRDCDRAIEINPDS, and AQPYKWRGKAHRLLGHWEEAAHDLALACKLDYDE. The span at 255–271 shows a compositional bias: basic and acidic residues; sequence KAREEHERAQREEEARR. A disordered region spans residues 255–296; that stretch reads KAREEHERAQREEEARRQSGSQYGSFPGGFPGGMPGNFPGGM. Residues 280 to 296 are compositionally biased toward gly residues; that stretch reads FPGGFPGGMPGNFPGGM. Positions 321-360 constitute an STI1 domain; sequence DPEVLAAMQDPEVMVAFQDVAQNPSNMSKYQSNPKVMNLI. Ser-348 bears the Phosphoserine; by GRK5 mark. Residues Lys-355 and Lys-362 each carry the N6-acetyllysine modification.

The protein belongs to the FAM10 family. In terms of assembly, homotetramer. Interacts with HSC70 as well as DNAJ homologs and HSP90. Interacts (via the C-terminus 302- 318 AA) with GRK5.

It is found in the cytoplasm. In terms of biological role, one HIP oligomer binds the ATPase domains of at least two HSC70 molecules dependent on activation of the HSC70 ATPase by HSP40. Stabilizes the ADP state of HSC70 that has a high affinity for substrate protein. Through its own chaperone activity, it may contribute to the interaction of HSC70 with various target proteins. The polypeptide is Hsc70-interacting protein (St13) (Mus musculus (Mouse)).